A 169-amino-acid polypeptide reads, in one-letter code: Putative phosphoesterase SSP1770 (169 aa).

H34 acts as the Proton donor in catalysis. 2 consecutive short sequence motifs (HXTX) follow at residues 34-37 (HITI) and 115-118 (HFTI). The Proton acceptor role is filled by H115.

This sequence belongs to the 2H phosphoesterase superfamily. YjcG family.

This Staphylococcus saprophyticus subsp. saprophyticus (strain ATCC 15305 / DSM 20229 / NCIMB 8711 / NCTC 7292 / S-41) protein is Putative phosphoesterase SSP1770.